Reading from the N-terminus, the 90-residue chain is Probable Fe(2+)-trafficking protein (90 aa).

This sequence belongs to the Fe(2+)-trafficking protein family. In terms of assembly, monomer.

Functionally, could be a mediator in iron transactions between iron acquisition and iron-requiring processes, such as synthesis and/or repair of Fe-S clusters in biosynthetic enzymes. This chain is Probable Fe(2+)-trafficking protein, found in Yersinia pestis bv. Antiqua (strain Antiqua).